The following is a 129-amino-acid chain: Small ribosomal subunit protein uS11 (129 aa).

The protein belongs to the universal ribosomal protein uS11 family. Part of the 30S ribosomal subunit. Interacts with proteins S7 and S18. Binds to IF-3.

Located on the platform of the 30S subunit, it bridges several disparate RNA helices of the 16S rRNA. Forms part of the Shine-Dalgarno cleft in the 70S ribosome. This chain is Small ribosomal subunit protein uS11, found in Beijerinckia indica subsp. indica (strain ATCC 9039 / DSM 1715 / NCIMB 8712).